Consider the following 127-residue polypeptide: Ribonuclease P protein component 1 (127 aa).

Belongs to the eukaryotic/archaeal RNase P protein component 1 family. As to quaternary structure, consists of a catalytic RNA component and at least 4 protein subunits. Forms a subcomplex with Rnp4 which stimulates the catalytic RNA.

It is found in the cytoplasm. The enzyme catalyses Endonucleolytic cleavage of RNA, removing 5'-extranucleotides from tRNA precursor.. Part of ribonuclease P, a protein complex that generates mature tRNA molecules by cleaving their 5'-ends. The RNA is catalytic, but its KM for pre-tRNA is 170-fold decreased in the presence of the 4 known protein subunits (Rnp1-4). The protein subunits also decrease the amount of Mg(2+) needed for activity. The polypeptide is Ribonuclease P protein component 1 (Pyrococcus furiosus (strain ATCC 43587 / DSM 3638 / JCM 8422 / Vc1)).